We begin with the raw amino-acid sequence, 366 residues long: uncharacterized protein (366 aa).

Positions 199-267 (QKKQIEDEEK…QLKDAQAKRD (69 aa)) are disordered.

This is an uncharacterized protein from Haemophilus influenzae (strain ATCC 51907 / DSM 11121 / KW20 / Rd).